Here is a 406-residue protein sequence, read N- to C-terminus: Argininosuccinate synthase (406 aa).

Residues Ala-14 to Ser-22 and Ala-41 contribute to the ATP site. Tyr-92 and Ser-97 together coordinate L-citrulline. Gly-122 provides a ligand contact to ATP. Residues Thr-124, Asn-128, and Asp-129 each contribute to the L-aspartate site. Asn-128 lines the L-citrulline pocket. L-citrulline is bound by residues Arg-132, Ser-181, Ser-190, Glu-266, and Tyr-278.

This sequence belongs to the argininosuccinate synthase family. Type 1 subfamily. As to quaternary structure, homotetramer.

The protein localises to the cytoplasm. It catalyses the reaction L-citrulline + L-aspartate + ATP = 2-(N(omega)-L-arginino)succinate + AMP + diphosphate + H(+). It participates in amino-acid biosynthesis; L-arginine biosynthesis; L-arginine from L-ornithine and carbamoyl phosphate: step 2/3. The sequence is that of Argininosuccinate synthase from Geobacter sulfurreducens (strain ATCC 51573 / DSM 12127 / PCA).